The primary structure comprises 692 residues: Elongation factor G (692 aa).

Residues 8-282 (ENTRNIGIMA…GVVDYLPSPV (275 aa)) form the tr-type G domain. Residues 17–24 (AHIDAGKT), 81–85 (DTPGH), and 135–138 (NKMD) each bind GTP.

Belongs to the TRAFAC class translation factor GTPase superfamily. Classic translation factor GTPase family. EF-G/EF-2 subfamily.

The protein localises to the cytoplasm. Functionally, catalyzes the GTP-dependent ribosomal translocation step during translation elongation. During this step, the ribosome changes from the pre-translocational (PRE) to the post-translocational (POST) state as the newly formed A-site-bound peptidyl-tRNA and P-site-bound deacylated tRNA move to the P and E sites, respectively. Catalyzes the coordinated movement of the two tRNA molecules, the mRNA and conformational changes in the ribosome. The protein is Elongation factor G of Anoxybacillus flavithermus (strain DSM 21510 / WK1).